Consider the following 284-residue polypeptide: 4-diphosphocytidyl-2-C-methyl-D-erythritol kinase (284 aa).

Residue K14 is part of the active site. 98–108 (PMGGGLGGGSS) contacts ATP. D140 is a catalytic residue.

It belongs to the GHMP kinase family. IspE subfamily.

The enzyme catalyses 4-CDP-2-C-methyl-D-erythritol + ATP = 4-CDP-2-C-methyl-D-erythritol 2-phosphate + ADP + H(+). The protein operates within isoprenoid biosynthesis; isopentenyl diphosphate biosynthesis via DXP pathway; isopentenyl diphosphate from 1-deoxy-D-xylulose 5-phosphate: step 3/6. Its function is as follows. Catalyzes the phosphorylation of the position 2 hydroxy group of 4-diphosphocytidyl-2C-methyl-D-erythritol. The protein is 4-diphosphocytidyl-2-C-methyl-D-erythritol kinase of Shewanella sp. (strain ANA-3).